We begin with the raw amino-acid sequence, 208 residues long: Small ribosomal subunit protein uS4 (208 aa).

An S4 RNA-binding domain is found at 97–160 (TRLDNVCYRM…QKQLRVQEAL (64 aa)).

The protein belongs to the universal ribosomal protein uS4 family. Part of the 30S ribosomal subunit. Contacts protein S5. The interaction surface between S4 and S5 is involved in control of translational fidelity.

Its function is as follows. One of the primary rRNA binding proteins, it binds directly to 16S rRNA where it nucleates assembly of the body of the 30S subunit. Functionally, with S5 and S12 plays an important role in translational accuracy. In Xanthomonas oryzae pv. oryzae (strain MAFF 311018), this protein is Small ribosomal subunit protein uS4.